Here is a 190-residue protein sequence, read N- to C-terminus: Protein GrpE (190 aa).

The interval Met1–Lys41 is disordered.

This sequence belongs to the GrpE family. As to quaternary structure, homodimer.

It localises to the cytoplasm. Its function is as follows. Participates actively in the response to hyperosmotic and heat shock by preventing the aggregation of stress-denatured proteins, in association with DnaK and GrpE. It is the nucleotide exchange factor for DnaK and may function as a thermosensor. Unfolded proteins bind initially to DnaJ; upon interaction with the DnaJ-bound protein, DnaK hydrolyzes its bound ATP, resulting in the formation of a stable complex. GrpE releases ADP from DnaK; ATP binding to DnaK triggers the release of the substrate protein, thus completing the reaction cycle. Several rounds of ATP-dependent interactions between DnaJ, DnaK and GrpE are required for fully efficient folding. This is Protein GrpE from Limosilactobacillus reuteri (strain DSM 20016) (Lactobacillus reuteri).